We begin with the raw amino-acid sequence, 316 residues long: MATIEACDFFPYTVLSRSQWKSLRKASSLPINEQELEQLVGLNEPITLNEVADIYVPLAELLHVHATAYQRLQQQKRGFFHHGKNRSPFIIGLAGSVAVGKSTTARLLQKLLKAWPEHHHVDLVTTDGFLYPNETLEARGLMDKKGFPESYDLPALIRFLSDVKAGEPYVKAPVYSHLTYNIVEGDYQVVHEPDIVIVEGINVLQVNKRNHHIPNVFVSDFFDFSIYVDAKEEQILQWYIERFKLLQNTAFQDPNSYFHRFRHLSEVEAEQFATSIWKNINGVNLHENILPTKHRADLVLQKGPHHFIDEVKLRNI.

Residue 95–102 (GSVAVGKS) participates in ATP binding.

The protein belongs to the prokaryotic pantothenate kinase family.

The protein localises to the cytoplasm. It carries out the reaction (R)-pantothenate + ATP = (R)-4'-phosphopantothenate + ADP + H(+). It functions in the pathway cofactor biosynthesis; coenzyme A biosynthesis; CoA from (R)-pantothenate: step 1/5. This chain is Pantothenate kinase (coaA), found in Halalkalibacterium halodurans (strain ATCC BAA-125 / DSM 18197 / FERM 7344 / JCM 9153 / C-125) (Bacillus halodurans).